Here is a 511-residue protein sequence, read N- to C-terminus: Intermediate cleaving peptidase 55 (511 aa).

Residues Asp-327, Asp-338, His-417, Glu-444, and Glu-467 each contribute to the Mn(2+) site.

It belongs to the peptidase M24B family. It depends on Mn(2+) as a cofactor.

It localises to the nucleus. It is found in the mitochondrion inner membrane. It carries out the reaction The enzyme cleaves the 36-Pro-Pro-37 bond of cysteine desulfurase (EC 2.8.1.7) removing three amino acid residues (Tyr-Ser-Pro) from the N-terminus after cleavage by mitochondrial processing peptidase.. Functionally, aminopeptidase which cleaves preprotein intermediates that carry destabilizing N-ter amino acid residues after the mitochondrial processing peptidase (MPP) cleavage site and is thus critical for stabilization of the mitochondrial proteome. In Saccharomyces cerevisiae (strain ATCC 204508 / S288c) (Baker's yeast), this protein is Intermediate cleaving peptidase 55 (ICP55).